The chain runs to 383 residues: Lipid-A-disaccharide synthase (383 aa).

The protein belongs to the LpxB family.

It carries out the reaction a lipid X + a UDP-2-N,3-O-bis[(3R)-3-hydroxyacyl]-alpha-D-glucosamine = a lipid A disaccharide + UDP + H(+). It functions in the pathway bacterial outer membrane biogenesis; LPS lipid A biosynthesis. In terms of biological role, condensation of UDP-2,3-diacylglucosamine and 2,3-diacylglucosamine-1-phosphate to form lipid A disaccharide, a precursor of lipid A, a phosphorylated glycolipid that anchors the lipopolysaccharide to the outer membrane of the cell. The protein is Lipid-A-disaccharide synthase of Aliivibrio fischeri (strain MJ11) (Vibrio fischeri).